Consider the following 327-residue polypeptide: Delta-aminolevulinic acid dehydratase (327 aa).

Positions 119, 121, and 129 each coordinate Zn(2+). Catalysis depends on K198, which acts as the Schiff-base intermediate with substrate. Positions 208 and 220 each coordinate 5-aminolevulinate. Residue E236 coordinates Mg(2+). The active-site Schiff-base intermediate with substrate is K251. The 5-aminolevulinate site is built by S277 and Y316.

Belongs to the ALAD family. In terms of assembly, homooctamer. Requires Zn(2+) as cofactor.

The enzyme catalyses 2 5-aminolevulinate = porphobilinogen + 2 H2O + H(+). The protein operates within porphyrin-containing compound metabolism; protoporphyrin-IX biosynthesis; coproporphyrinogen-III from 5-aminolevulinate: step 1/4. In terms of biological role, catalyzes an early step in the biosynthesis of tetrapyrroles. Binds two molecules of 5-aminolevulinate per subunit, each at a distinct site, and catalyzes their condensation to form porphobilinogen. This is Delta-aminolevulinic acid dehydratase (hemB) from Synechocystis sp. (strain ATCC 27184 / PCC 6803 / Kazusa).